The chain runs to 774 residues: Two pore channel protein 2 (774 aa).

Topologically, residues 1 to 92 (MEEEPLLAGS…GSLRLYRWYY (92 aa)) are cytoplasmic. The helical transmembrane segment at 93–113 (SNLCQWGLGLTIAVVLALAFI) threads the bilayer. The Extracellular portion of the chain corresponds to 114-140 (ERPSSLTYTSDIRVKPKPWEPPCGMTE). The chain crosses the membrane as a helical span at residues 141–161 (GIEIVCLCIFILDVTAKGYLI). Residues 162–170 (GWEEFRMNK) are Cytoplasmic-facing. The chain crosses the membrane as a helical span at residues 171-191 (WLLAYLIVITASVIDWMLSIS). Residues 192–197 (MLCDEN) are Extracellular-facing. A helical transmembrane segment spans residues 198–218 (LRVRRLIRPFFLLQNSSLMKK). Positions 217–221 (KKTLK) are interaction with phosphatidylinositol 3,5-bisphosphate. The Cytoplasmic segment spans residues 219–232 (TLKCIKRTLPEIAS). A helical membrane pass occupies residues 233 to 253 (VILLLALHICLFTMIGMLIFA). Residues 254–267 (KSDDPKQNGEWQTY) lie on the Extracellular side of the membrane. The segment at residues 268–292 (FRNLPKALSSLLVLLTTANNPDVMI) is an intramembrane region (helical; Pore-forming). The Extracellular segment spans residues 293-302 (PAYSLNRGYS). Residues 303–323 (IFFILFSVFGTYLLMNLMTAI) traverse the membrane as a helical segment. Residues 324-452 (IYNQFRGYLL…YVYSHYYISV (129 aa)) are Cytoplasmic-facing. A helical transmembrane segment spans residues 453-475 (LGNAVALANVICICTVLVLNAEK). Residues 476 to 486 (SASEKNYFYME) are Extracellular-facing. Residues 487 to 507 (IINCIFILYYLIEMLLKIVAF) traverse the membrane as a helical segment. At 508–518 (GWKGYLSYRNN) the chain is on the cytoplasmic side. A helical membrane pass occupies residues 519 to 539 (IFDGFLTVLLLAIQIVIFITF). Topologically, residues 540-564 (KIPYVDVDPVPRHVMALWEMIRLVN) are extracellular. The helical transmembrane segment at 565–585 (MLIVFRFLRIIPEIKLMAVVA) threads the bilayer. Over 586-596 (STIVDLVKNLR) the chain is Cytoplasmic. The chain crosses the membrane as a helical span at residues 597–617 (AFAGILLVVYYMFAVLGIWLF). Over 618–658 (QGAISPPSNMSLVSNSSLENITGPYSMECGTFEQLEYWPNN) the chain is Extracellular. N-linked (GlcNAc...) asparagine glycans are attached at residues asparagine 626, asparagine 632, and asparagine 637. The segment at residues 659–681 (FDDFASSLILLYNIMVVNNWHVF) is an intramembrane region (helical; Pore-forming). The Extracellular segment spans residues 682–696 (TDAYARYTTDWSLVY). A helical transmembrane segment spans residues 697–717 (FVVWWLTSSVMWVNLFVALIL). At 718-774 (ENFTYKWDRSNGLSVEDVERIAYQSTVQLMFKEHVKEPTEEELLAQLHQHPHLHLSW) the chain is on the cytoplasmic side.

Belongs to the calcium channel alpha-1 subunit (TC 1.A.1.11) family. Two pore calcium channel subfamily. Homodimer. N-glycosylated.

The protein resides in the late endosome membrane. It is found in the lysosome membrane. It carries out the reaction Na(+)(in) = Na(+)(out). It catalyses the reaction Ca(2+)(in) = Ca(2+)(out). Functionally, intracellular channel initially characterized as a non-selective Ca(2+)-permeable channel activated by NAADP (nicotinic acid adenine dinucleotide phosphate), it is also a highly-selective Na(+) channel activated directly by PI(3,5)P2 (phosphatidylinositol 3,5-bisphosphate). Localizes to the lysosomal and late endosome membranes where it regulates organellar membrane excitability, membrane trafficking, and pH homeostasis. The protein is Two pore channel protein 2 (tpcn2) of Danio rerio (Zebrafish).